Consider the following 306-residue polypeptide: Pseudouridine-5'-phosphate glycosidase (306 aa).

Catalysis depends on glutamate 27, which acts as the Proton donor. Substrate contacts are provided by lysine 88 and valine 108. Aspartate 140 is a Mn(2+) binding site. 142 to 144 (SAD) is a substrate binding site. Lysine 161 (nucleophile) is an active-site residue.

Belongs to the pseudouridine-5'-phosphate glycosidase family. In terms of assembly, homotrimer. The cofactor is Mn(2+).

It catalyses the reaction D-ribose 5-phosphate + uracil = psi-UMP + H2O. Its function is as follows. Catalyzes the reversible cleavage of pseudouridine 5'-phosphate (PsiMP) to ribose 5-phosphate and uracil. Functions biologically in the cleavage direction, as part of a pseudouridine degradation pathway. In Petrotoga mobilis (strain DSM 10674 / SJ95), this protein is Pseudouridine-5'-phosphate glycosidase.